The sequence spans 133 residues: Small ribosomal subunit protein uS8 (133 aa).

It belongs to the universal ribosomal protein uS8 family. Part of the 30S ribosomal subunit. Contacts proteins S5 and S12.

Functionally, one of the primary rRNA binding proteins, it binds directly to 16S rRNA central domain where it helps coordinate assembly of the platform of the 30S subunit. This chain is Small ribosomal subunit protein uS8, found in Chlamydia caviae (strain ATCC VR-813 / DSM 19441 / 03DC25 / GPIC) (Chlamydophila caviae).